The sequence spans 870 residues: A-kinase anchor protein 2 (870 aa).

2 disordered regions span residues 14-43 and 103-165; these read PGITSTPHSKDHSSPFYSPSHNGLLTDHHE and IEKA…SSRD. Residue S122 is modified to Phosphoserine. Polar residues predominate over residues 133 to 151; the sequence is GHSTDQPQDMLGNSLQAPA. S152 carries the phosphoserine modification. The span at 152–161 shows a compositional bias: low complexity; it reads SPSSSTSSHC. K174 participates in a covalent cross-link: Glycyl lysine isopeptide (Lys-Gly) (interchain with G-Cter in SUMO1); alternate. Residue K174 forms a Glycyl lysine isopeptide (Lys-Gly) (interchain with G-Cter in SUMO2); alternate linkage. Residues 213–307 are a coiled coil; it reads EEMIELEKER…QQQQLSTSQL (95 aa). Positions 233-324 are disordered; the sequence is KNPGIAAKWW…EHLDSIEHTK (92 aa). Residues 259–274 show a composition bias toward basic and acidic residues; it reads LESHRKYKERKEKRAQ. The span at 275 to 302 shows a compositional bias: low complexity; that stretch reads QEQLQLQQQQQQQLQQLQQLQQQQQQQL. Residues 313 to 324 show a composition bias toward basic and acidic residues; it reads AHEHLDSIEHTK. Phosphoserine is present on S347. The interval 409-436 is disordered; it reads ESQSAGAGTGNAATQGKEGPYSEPSKRG. The segment covering 410 to 424 has biased composition (low complexity); sequence SQSAGAGTGNAATQG. 3 positions are modified to phosphoserine: S472, S476, and S528. Residues 506–543 show a composition bias toward polar residues; sequence FSMDNISDSGASNETPNALQENSLADFSLPQTPQTDNP. 2 disordered regions span residues 506–577 and 595–688; these read FSMD…DPLE and QVDK…RPEG. T537 carries the post-translational modification Phosphothreonine. The interval 576 to 589 is PKA-RII subunit binding domain; that stretch reads LEYQAGLLVQNAIQ. Over residues 595–608 the composition is skewed to basic and acidic residues; the sequence is QVDKAEVHTSKEGS. S641 carries the post-translational modification Phosphoserine. Residues 644 to 665 are compositionally biased toward basic and acidic residues; sequence QEKRDVLPKILPGEDKTLREKG. Residues 720–755 adopt a coiled-coil conformation; that stretch reads KLRSRKQRTLSMIEEEIRAAQEREEELKRQRQVRQS. A phosphoserine mark is found at S730, S758, S789, and S796. The segment at 740–814 is disordered; sequence QEREEELKRQ…EAAGAQRPKN (75 aa). Positions 755–774 are enriched in polar residues; it reads STPSPRAQNAPSLPSRTTCY.

It is found in the apical cell membrane. Its function is as follows. Binds to regulatory subunit (RII) of protein kinase A. May be involved in establishing polarity in signaling systems or in integrating PKA-RII isoforms with downstream effectors to capture, amplify and focus diffuse, trans-cellular signals carried by cAMP. Binds to and modulates the structure of the actin cytoskeleton. The sequence is that of A-kinase anchor protein 2 from Rattus norvegicus (Rat).